The sequence spans 162 residues: Peptide deformylase-like (162 aa).

It belongs to the polypeptide deformylase family.

In Staphylococcus aureus (strain MRSA252), this protein is Peptide deformylase-like.